The following is a 427-amino-acid chain: Enolase (427 aa).

Glutamine 163 lines the (2R)-2-phosphoglycerate pocket. The active-site Proton donor is the glutamate 205. Residues aspartate 242, glutamate 285, and aspartate 312 each coordinate Mg(2+). (2R)-2-phosphoglycerate-binding residues include lysine 337, arginine 366, serine 367, and lysine 388. The active-site Proton acceptor is the lysine 337.

The protein belongs to the enolase family. Mg(2+) is required as a cofactor.

It is found in the cytoplasm. The protein resides in the secreted. The protein localises to the cell surface. The enzyme catalyses (2R)-2-phosphoglycerate = phosphoenolpyruvate + H2O. Its pathway is carbohydrate degradation; glycolysis; pyruvate from D-glyceraldehyde 3-phosphate: step 4/5. Catalyzes the reversible conversion of 2-phosphoglycerate (2-PG) into phosphoenolpyruvate (PEP). It is essential for the degradation of carbohydrates via glycolysis. This Nitrosospira multiformis (strain ATCC 25196 / NCIMB 11849 / C 71) protein is Enolase.